The primary structure comprises 594 residues: Homeobox protein prospero homolog 1 (594 aa).

Polar residues-rich tracts occupy residues 1–13 and 36–50; these read MSSGLPSIAATAQ and PPVNSNGSTPNSSNR. Disordered regions lie at residues 1–20, 30–180, and 358–389; these read MSSGLPSIAATAQPSANGFS, IYYS…FQPQ, and DTSSEMKKKRTKVEIKKEDAMSSRASPLSASA. The span at 73–101 shows a compositional bias: low complexity; the sequence is STSVSSNSSSSSSTSNTNSTPSSSSTSSK. Residues 105–117 show a composition bias toward polar residues; that stretch reads EGMTETETMTASI. Residues 118–135 show a composition bias toward basic and acidic residues; the sequence is EQEKVIQNEESEAGKDGM. The segment covering 136–162 has biased composition (acidic residues); sequence EEHDDGMNDFEIIDDTNDEVEESEERE. The segment covering 369–378 has biased composition (basic and acidic residues); sequence KVEIKKEDAM. Over residues 379 to 389 the composition is skewed to low complexity; that stretch reads SSRASPLSASA. In terms of domain architecture, Prospero-type homeo spans 435–493; sequence SSMLTPMHLRKAKLMFFYTRYPNSNLLKSYFPDIRFNKNNTAQLVKWFSNFREFYYNQM. The interval 435–593 is homeo-Prospero; that stretch reads SSMLTPMHLR…KEPNFLERLE (159 aa). Positions 494-593 constitute a Prospero domain; it reads EKFARQALAE…KEPNFLERLE (100 aa).

This sequence belongs to the Prospero homeodomain family.

It is found in the nucleus. Functionally, transcription factor involved in developmental processes. Controls the transcription of genes required for excretory canal formation. The protein is Homeobox protein prospero homolog 1 of Caenorhabditis elegans.